The following is a 435-amino-acid chain: Methylenetetrahydrofolate--tRNA-(uracil-5-)-methyltransferase TrmFO (435 aa).

10–15 is a binding site for FAD; that stretch reads GAGLAG.

It belongs to the MnmG family. TrmFO subfamily. As to quaternary structure, homodimer. FAD serves as cofactor.

It localises to the cytoplasm. It catalyses the reaction uridine(54) in tRNA + (6R)-5,10-methylene-5,6,7,8-tetrahydrofolate + NADH + H(+) = 5-methyluridine(54) in tRNA + (6S)-5,6,7,8-tetrahydrofolate + NAD(+). The enzyme catalyses uridine(54) in tRNA + (6R)-5,10-methylene-5,6,7,8-tetrahydrofolate + NADPH + H(+) = 5-methyluridine(54) in tRNA + (6S)-5,6,7,8-tetrahydrofolate + NADP(+). Its function is as follows. Catalyzes the folate-dependent formation of 5-methyl-uridine at position 54 (M-5-U54) in all tRNAs. The protein is Methylenetetrahydrofolate--tRNA-(uracil-5-)-methyltransferase TrmFO of Bacillus subtilis (strain 168).